The primary structure comprises 256 residues: Thiazole synthase (256 aa).

Residue lysine 95 is the Schiff-base intermediate with DXP of the active site. 1-deoxy-D-xylulose 5-phosphate-binding positions include glycine 156, 182-183 (AG), and 204-205 (NT).

Belongs to the ThiG family. Homotetramer. Forms heterodimers with either ThiH or ThiS.

The protein localises to the cytoplasm. The enzyme catalyses [ThiS sulfur-carrier protein]-C-terminal-Gly-aminoethanethioate + 2-iminoacetate + 1-deoxy-D-xylulose 5-phosphate = [ThiS sulfur-carrier protein]-C-terminal Gly-Gly + 2-[(2R,5Z)-2-carboxy-4-methylthiazol-5(2H)-ylidene]ethyl phosphate + 2 H2O + H(+). Its pathway is cofactor biosynthesis; thiamine diphosphate biosynthesis. In terms of biological role, catalyzes the rearrangement of 1-deoxy-D-xylulose 5-phosphate (DXP) to produce the thiazole phosphate moiety of thiamine. Sulfur is provided by the thiocarboxylate moiety of the carrier protein ThiS. In vitro, sulfur can be provided by H(2)S. In Cronobacter sakazakii (strain ATCC BAA-894) (Enterobacter sakazakii), this protein is Thiazole synthase.